We begin with the raw amino-acid sequence, 219 residues long: Pyridoxal 5'-phosphate synthase subunit PDX2 (219 aa).

G52 to S54 serves as a coordination point for L-glutamine. The active-site Nucleophile is C87. L-glutamine contacts are provided by residues R121 and I153–R154. Catalysis depends on charge relay system residues H196 and E198.

The protein belongs to the glutaminase PdxT/SNO family. As to quaternary structure, in the presence of Pdx1, forms a dodecamer of heterodimers. Only shows activity in the heterodimer.

The protein resides in the cytoplasm. The enzyme catalyses aldehydo-D-ribose 5-phosphate + D-glyceraldehyde 3-phosphate + L-glutamine = pyridoxal 5'-phosphate + L-glutamate + phosphate + 3 H2O + H(+). The catalysed reaction is L-glutamine + H2O = L-glutamate + NH4(+). It participates in cofactor biosynthesis; pyridoxal 5'-phosphate biosynthesis. Catalyzes the hydrolysis of glutamine to glutamate and ammonia as part of the biosynthesis of pyridoxal 5'-phosphate. The resulting ammonia molecule is channeled to the active site of Pdx1. The polypeptide is Pyridoxal 5'-phosphate synthase subunit PDX2 (Plasmodium falciparum (isolate 3D7)).